The primary structure comprises 271 residues: PA-phosphatase related-family protein DDB_G0284367 (271 aa).

Transmembrane regions (helical) follow at residues 23–43, 68–88, 102–122, 150–170, 181–201, and 211–231; these read FLCLGIFVIESVLFNFVIPPF, IVPVWLLMLIALGLPMVVFIG, AALGLFQAFTITMLFTDILKV, FPSGHSSVSFCGMTFLSFYLC, GNILKALVCLCPFMISALVAV, and FSDILAGSVIGLSIGVFVYFM.

The protein belongs to the PA-phosphatase related phosphoesterase family.

The protein resides in the membrane. In Dictyostelium discoideum (Social amoeba), this protein is PA-phosphatase related-family protein DDB_G0284367.